A 266-amino-acid chain; its full sequence is Signal peptidase I (266 aa).

Residues 1–20 (MQTDNTKSNTNKTAKQEWGS) are Cytoplasmic-facing. Residues 21–41 (FAFVICIALLIRILIMEPFTV) form a helical membrane-spanning segment. Topologically, residues 42–266 (PTGSMKATIL…IFRNLYSTDE (225 aa)) are periplasmic. Active-site residues include serine 45 and lysine 108.

Belongs to the peptidase S26 family.

The protein localises to the cell inner membrane. The catalysed reaction is Cleavage of hydrophobic, N-terminal signal or leader sequences from secreted and periplasmic proteins.. The sequence is that of Signal peptidase I (lepB) from Rickettsia felis (strain ATCC VR-1525 / URRWXCal2) (Rickettsia azadi).